The following is a 512-amino-acid chain: mRNA export factor (512 aa).

The tract at residues Met1–Ala242 is disordered. The short motif at Ile5–Asp17 is the Nuclear export signal element. 2 positions are modified to phosphoserine; by host: Ser16 and Ser18. Composition is skewed to acidic residues over residues Ser16–Asp28 and Pro36–Cys55. The tract at residues Val104–Arg112 is interaction with host ALYREF. Residues Thr110–Arg138 carry the Nuclear localization signal motif. A Phosphoserine; by host modification is found at Ser113. Residues Pro135–Gly149 are compositionally biased toward basic residues. Arg138 carries the dimethylated arginine; by host modification. The interval Arg138–Gly152 is RGG-box. At Arg148 the chain carries Omega-N-methylarginine; by host. Arg150 is subject to Dimethylated arginine; by host. The segment covering Ala228–Pro240 has biased composition (basic and acidic residues). Zn(2+)-binding residues include Cys400, His479, Cys483, and Cys488. A CHC2-type zinc finger spans residues Cys400–Cys488.

The protein belongs to the HHV-1 ICP27 protein family. In terms of assembly, interacts with host RBP1; this interaction facilitates the RNA polymerase recruitment to viral transcription sites. Interacts (via the RGG box) with host ALYREF/THOC4; this interaction recruits ALYREF to viral replication compartments and probably directs viral mRNA to the TAP/NFX1 pathway. Interacts (via the RGG box) with host SRPK1; this interaction relocalizes SRPK1 to the nucleus and seems to alter its activity. Interacts with ICP4; this interaction modulates ICP4 DNA-binding activity. Interacts with host NXF1; this interaction allows efficient export of HSV-1 early and late transcripts. Interacts with host IRF3; this interaction inhibits IRF3 phosphorylation and nuclear translocation. Methylated within the RGG box possibly by host PRMT1. When hypomethylated, ICP27 is exported to the cytoplasm earlier and more rapidly. Post-translationally, phosphorylated.

Its subcellular location is the host cytoplasm. The protein localises to the host nucleus. Functionally, multifunctional regulator of the expression of viral genes that contributes to the shutoff of host protein synthesis and mediates nuclear export of viral intronless mRNAs. Also stimulates translation of viral transcripts. Independently, plays a role in the regulation of virion release. Also plays a role in the inhibition of host innate immune response by targeting host IRF3 and thereby preventing production of beta-interferon. Silences the 3' splice site of the host promyelocytic leukemia (PML) intron 7a, thereby switching PML isoforms from PML-II to PML-V. This could be linked to the accelerated mRNA export induced by ICP27 which might not provide sufficient time for PML pre-mRNA to be spliced in the nucleus. Also suppresses splicing of the viral ICP34.5 mRNA, allowing the virus to express a variant form of ICP34.5. The chain is mRNA export factor from Human herpesvirus 2 (strain HG52) (HHV-2).